Consider the following 220-residue polypeptide: Orotate phosphoribosyltransferase (220 aa).

Residue Lys26 coordinates 5-phospho-alpha-D-ribose 1-diphosphate. 34 to 35 (FF) is a binding site for orotate. Residues 72–73 (YK), Arg101, Lys102, Lys105, His107, and 126–134 (DDVITAGTS) each bind 5-phospho-alpha-D-ribose 1-diphosphate. Orotate-binding residues include Thr130 and Arg158.

Belongs to the purine/pyrimidine phosphoribosyltransferase family. PyrE subfamily. In terms of assembly, homodimer. Mg(2+) serves as cofactor.

The enzyme catalyses orotidine 5'-phosphate + diphosphate = orotate + 5-phospho-alpha-D-ribose 1-diphosphate. Its pathway is pyrimidine metabolism; UMP biosynthesis via de novo pathway; UMP from orotate: step 1/2. Its function is as follows. Catalyzes the transfer of a ribosyl phosphate group from 5-phosphoribose 1-diphosphate to orotate, leading to the formation of orotidine monophosphate (OMP). The protein is Orotate phosphoribosyltransferase of Bordetella avium (strain 197N).